A 65-amino-acid chain; its full sequence is Small ribosomal subunit protein bS21 (65 aa).

This sequence belongs to the bacterial ribosomal protein bS21 family.

This is Small ribosomal subunit protein bS21 from Trichlorobacter lovleyi (strain ATCC BAA-1151 / DSM 17278 / SZ) (Geobacter lovleyi).